The chain runs to 492 residues: NADH-quinone oxidoreductase subunit N (492 aa).

The next 14 membrane-spanning stretches (helical) occupy residues 18-38 (ILPMLVLVCGGIFTLLINAFT), 45-65 (LNMFLCMLFLVLDFLVVLGLE), 80-100 (LSLVSQSIVLISAFLLIFLAL), 108-128 (FQTAEFYPLYLFIIAGFQFMV), 133-153 (LLLMLIGLETASLPICVLMAL), 167-187 (FTMGAMASAFFAMGAMAFYLL), 209-229 (MLFAMGVIFLIGAIGFKVSLV), 250-270 (ISIVPKIAGFVVATRLFGAFI), 277-297 (VEDIFYALILITITIPNLIAL), 305-325 (MLAYSSISHSGFALACVFIHT), 333-353 (FVYWFMFAFTYIGAFGLLWLL), 381-401 (VAILGAIFVFGLAGIPPFSVF), 415-435 (NHILLAAVMLANSAVAVFYYF), and 464-484 (MPIYAVIIAMALVCLFSVFMM).

The protein belongs to the complex I subunit 2 family. As to quaternary structure, NDH-1 is composed of 14 different subunits. Subunits NuoA, H, J, K, L, M, N constitute the membrane sector of the complex.

The protein localises to the cell inner membrane. It catalyses the reaction a quinone + NADH + 5 H(+)(in) = a quinol + NAD(+) + 4 H(+)(out). In terms of biological role, NDH-1 shuttles electrons from NADH, via FMN and iron-sulfur (Fe-S) centers, to quinones in the respiratory chain. The immediate electron acceptor for the enzyme in this species is believed to be ubiquinone. Couples the redox reaction to proton translocation (for every two electrons transferred, four hydrogen ions are translocated across the cytoplasmic membrane), and thus conserves the redox energy in a proton gradient. This is NADH-quinone oxidoreductase subunit N from Helicobacter acinonychis (strain Sheeba).